Consider the following 595-residue polypeptide: Actin-histidine N-methyltransferase (595 aa).

Residues 1-22 are disordered; the sequence is MGKKSRVKTQKSGTGATATVSP. Polar residues predominate over residues 10–20; it reads QKSGTGATATV. Residues R75, 104 to 106, R254, 275 to 279, and 325 to 327 each bind S-adenosyl-L-methionine; these read EGF, DMCNH, and SGF. An SET domain is found at 94–314; it reads EGFEMVNFKE…AGEQIYIFYG (221 aa). At S513 the chain carries Phosphoserine. Polar residues predominate over residues 549–573; that stretch reads ENGLVNGENSIPNGTRSENENLNQE. Positions 549–595 are disordered; it reads ENGLVNGENSIPNGTRSENENLNQEGSKRAVEDAKGSSSDSTDEVKE. Over residues 574-583 the composition is skewed to basic and acidic residues; the sequence is GSKRAVEDAK.

Belongs to the class V-like SAM-binding methyltransferase superfamily. SETD3 actin-histidine methyltransferase family. In terms of assembly, interacts with MYOD1. In terms of processing, phosphorylated by GSK3B, which is required for recognition by the SCF(FBXW7) complex and subsequent degradation. Ubiquitinated by the SCF(FBXW7) complex following phosphorylation by GSK3B, leading to its degradation by the proteasome.

It localises to the cytoplasm. The protein resides in the nucleus. The catalysed reaction is L-histidyl-[protein] + S-adenosyl-L-methionine = N(tele)-methyl-L-histidyl-[protein] + S-adenosyl-L-homocysteine + H(+). Protein-histidine N-methyltransferase that specifically mediates 3-methylhistidine (tele-methylhistidine) methylation of actin at 'His-73'. Histidine methylation of actin is required for smooth muscle contraction of the laboring uterus during delivery. Does not have protein-lysine N-methyltransferase activity and probably only catalyzes histidine methylation of actin. This is Actin-histidine N-methyltransferase from Plecturocebus moloch (Dusky titi monkey).